The chain runs to 359 residues: Peptide chain release factor 1 (359 aa).

N5-methylglutamine is present on Q233.

This sequence belongs to the prokaryotic/mitochondrial release factor family. Methylated by PrmC. Methylation increases the termination efficiency of RF1.

It localises to the cytoplasm. Functionally, peptide chain release factor 1 directs the termination of translation in response to the peptide chain termination codons UAG and UAA. The sequence is that of Peptide chain release factor 1 from Cytophaga hutchinsonii (strain ATCC 33406 / DSM 1761 / CIP 103989 / NBRC 15051 / NCIMB 9469 / D465).